A 91-amino-acid chain; its full sequence is Small ribosomal subunit protein uS19 (91 aa).

The protein belongs to the universal ribosomal protein uS19 family.

Functionally, protein S19 forms a complex with S13 that binds strongly to the 16S ribosomal RNA. The polypeptide is Small ribosomal subunit protein uS19 (Burkholderia cenocepacia (strain HI2424)).